Reading from the N-terminus, the 433-residue chain is Serine/threonine-protein kinase DCLK1 (433 aa).

Residues 1-74 (MLELIEVNGT…GEEESDEGFQ (74 aa)) are disordered. Residues Ser-23, Ser-25, Ser-27, Ser-30, Ser-40, Ser-45, Ser-46, Ser-48, Ser-57, and Ser-69 each carry the phosphoserine modification. The segment covering 40–57 (SQHGGSSTSLSSTKVCSS) has biased composition (low complexity). The span at 59–71 (DENDGPGEEESDE) shows a compositional bias: acidic residues. In terms of domain architecture, Protein kinase spans 83–340 (YKVGRTIGDG…AVQVLEHPWV (258 aa)). Residues 89–97 (IGDGNFAVV) and Lys-112 contribute to the ATP site. Catalysis depends on Asp-204, which acts as the Proton acceptor. A Phosphotyrosine modification is found at Tyr-213. Basic and acidic residues predominate over residues 388-400 (QVFRRRRNQDVRG). The tract at residues 388–433 (QVFRRRRNQDVRGRYKAQPAPPELNSESEDYSPSSSETVRSPNSPF) is disordered. Ser-419, Ser-428, and Ser-431 each carry phosphoserine.

Belongs to the protein kinase superfamily. CAMK Ser/Thr protein kinase family. CaMK subfamily.

It carries out the reaction L-seryl-[protein] + ATP = O-phospho-L-seryl-[protein] + ADP + H(+). It catalyses the reaction L-threonyl-[protein] + ATP = O-phospho-L-threonyl-[protein] + ADP + H(+). In terms of biological role, probable kinase that may be involved in a calcium-signaling pathway controlling neuronal migration in the developing brain. May also participate in functions of the mature nervous system. The polypeptide is Serine/threonine-protein kinase DCLK1 (Dclk1) (Rattus norvegicus (Rat)).